The sequence spans 286 residues: 4-hydroxy-tetrahydrodipicolinate synthase 2 (286 aa).

T45 is a binding site for pyruvate. Y133 acts as the Proton donor/acceptor in catalysis. The active-site Schiff-base intermediate with substrate is K161. Position 203 (I203) interacts with pyruvate.

Belongs to the DapA family. Homotetramer; dimer of dimers.

The protein resides in the cytoplasm. It catalyses the reaction L-aspartate 4-semialdehyde + pyruvate = (2S,4S)-4-hydroxy-2,3,4,5-tetrahydrodipicolinate + H2O + H(+). The protein operates within amino-acid biosynthesis; L-lysine biosynthesis via DAP pathway; (S)-tetrahydrodipicolinate from L-aspartate: step 3/4. In terms of biological role, catalyzes the condensation of (S)-aspartate-beta-semialdehyde [(S)-ASA] and pyruvate to 4-hydroxy-tetrahydrodipicolinate (HTPA). The polypeptide is 4-hydroxy-tetrahydrodipicolinate synthase 2 (Clostridium acetobutylicum (strain ATCC 824 / DSM 792 / JCM 1419 / IAM 19013 / LMG 5710 / NBRC 13948 / NRRL B-527 / VKM B-1787 / 2291 / W)).